A 427-amino-acid polypeptide reads, in one-letter code: Glutamate-1-semialdehyde 2,1-aminomutase (427 aa).

K266 bears the N6-(pyridoxal phosphate)lysine mark.

The protein belongs to the class-III pyridoxal-phosphate-dependent aminotransferase family. HemL subfamily. Homodimer. Requires pyridoxal 5'-phosphate as cofactor.

It localises to the cytoplasm. The catalysed reaction is (S)-4-amino-5-oxopentanoate = 5-aminolevulinate. Its pathway is porphyrin-containing compound metabolism; protoporphyrin-IX biosynthesis; 5-aminolevulinate from L-glutamyl-tRNA(Glu): step 2/2. The chain is Glutamate-1-semialdehyde 2,1-aminomutase from Dechloromonas aromatica (strain RCB).